The following is a 228-amino-acid chain: Biopolymer transport protein exbB1 (228 aa).

3 helical membrane-spanning segments follow: residues 11-31 (LGLM…LLAE), 116-136 (LTLI…LGLI), and 158-178 (LGVA…AVAG).

Belongs to the ExbB/TolQ family. In terms of assembly, the accessory proteins ExbB and ExbD seem to form a complex with TonB.

The protein resides in the cell inner membrane. In terms of biological role, involved in the TonB-dependent energy-dependent transport of various receptor-bound substrates. Protects ExbD from proteolytic degradation and functionally stabilizes TonB. The chain is Biopolymer transport protein exbB1 (exbB1) from Vibrio cholerae serotype O1 (strain ATCC 39315 / El Tor Inaba N16961).